A 578-amino-acid polypeptide reads, in one-letter code: A-type ATP synthase subunit A (578 aa).

228–235 (GPFGSGKT) contributes to the ATP binding site.

This sequence belongs to the ATPase alpha/beta chains family. Has multiple subunits with at least A(3), B(3), C, D, E, F, H, I and proteolipid K(x).

It localises to the cell membrane. The enzyme catalyses ATP + H2O + 4 H(+)(in) = ADP + phosphate + 5 H(+)(out). Functionally, component of the A-type ATP synthase that produces ATP from ADP in the presence of a proton gradient across the membrane. The A chain is the catalytic subunit. The protein is A-type ATP synthase subunit A of Methanosarcina acetivorans (strain ATCC 35395 / DSM 2834 / JCM 12185 / C2A).